Consider the following 335-residue polypeptide: Ferrochelatase (335 aa).

2 residues coordinate Fe cation: His-207 and Glu-288.

It belongs to the ferrochelatase family.

It is found in the cytoplasm. It catalyses the reaction heme b + 2 H(+) = protoporphyrin IX + Fe(2+). Its pathway is porphyrin-containing compound metabolism; protoheme biosynthesis; protoheme from protoporphyrin-IX: step 1/1. Catalyzes the ferrous insertion into protoporphyrin IX. In Helicobacter pylori (strain J99 / ATCC 700824) (Campylobacter pylori J99), this protein is Ferrochelatase.